Here is a 951-residue protein sequence, read N- to C-terminus: MLGSMARKKPRNTSRLPLALNPLKSKDVLAVLAERNEAIVPVGAWVEPASPGSSEIPAYTSAYLIEEELKEQLRKKQEALKHFQKQVKYRVNQQIRLRKKQQLQKSYERAQKEGSIAMQSSATHLTSKRTSVFPNNLNVAIGSSRLPPSLMPGDGIEDEENQNELFQQQAQALSETMKQARHRLASFKTVIKKKGSVFPDDGRKSFLTREEVLSRKPASTGINTGIRGELPIKVHQGLLAAVPYQNYMENQELDYEEPDYEESSSLVTDEKGKEDLFGRGQQDQQAIHSEDKNKPFSRVQKVKFKNPLFVLMEEEEQKQLHFEGLQDILPEAQDYFLEAQGDLLETQGDLTGIQSVKPDTQAVEMKVQVTEPEGQAIEPEGQPIKTETQGIMLKAQSIELEEGSIVLKTQDFLPTNQALLTKNQDVLLKDHCVLPKDQSILLKYQDQDFLPRDQHVLHKDQDILPKYQDQNFLPKDQNFLSRDQHVLPKDQDILPKYQDQNFLPKDQNFLSRDQHVLPKDQNILPKYQGQDFLPKDQDFLSRDQHVLPKDWNILPKCQDQDFLPRDQGVLPKDQNILPICQDQDFLPRDQGYLPKDQNILPICQDRDFLPRDLHVLSNDQNILPKCQDQDFLPKYQKVHFKEPYSDMTDEKGREDFSLADYQCLPPKSQDQDDIKNQQPASFMREERVREELPLDYHQYVVPKIQDQDSPREQNKHIKLPSSFEKWEIARGNTPGVPLAYDRYQSGLSTEFQAPLAFQSDVDKEEDKKERQKQYLRHRRLFMDIEREQVKEQQRQKEQKKKIEKIKKKREQECYAAEQRILRMNFHEDPYSGEKLSEILAQLQLQEIKGTREKQQREKEYLRYVEALRAQIQEKMQLYNITLPPLCCCGPDFWDAHPDTCANNCIFYKNHRAYTRALHSFINSCDVPGGNSTLRVAIHNFASAHRRTLKNL.

4 coiled-coil regions span residues 64 to 89 (LIEE…QVKY), 154 to 193 (DGIE…VIKK), 782 to 813 (MDIE…EQEC), and 839 to 874 (LAQL…IQEK).

In terms of assembly, interacts with POC5, POC1B, CETN2 and FAM161A.

The protein resides in the cytoplasm. It is found in the cytoskeleton. It localises to the microtubule organizing center. The protein localises to the centrosome. Its subcellular location is the centriole. The protein resides in the centriolar satellite. In terms of biological role, plays an important role in primary cilium assembly, maintenance, and length regulation. Interacts with centriole inner scaffold proteins to promote proper centriole size and integrity and assembly of functional cilia. Required for the recruitment of both the inner scaffold protein POC1B and the distal SFI1/CETN2 complex to centrioles. This chain is Coiled-coil domain-containing protein 15 (CCDC15), found in Homo sapiens (Human).